The chain runs to 167 residues: MRLWFCLSFFIILCLEHFPGTLADERNVPESEEKTEQFLRDLSEISRLQRRPPGFSPFRGKFHSQSLRDLSEISRLQRRPPGFSPFRGKFHSQSMRDLSEISRLQRRPPGFSPFRGKFHSQSMRDLSEISRLQRRPPGFSPFRGKFHSQSLRGLSEIKRLKTTHKIH.

Residues 1–23 (MRLWFCLSFFIILCLEHFPGTLA) form the signal peptide.

The protein belongs to the bradykinin-related peptide family. As to expression, expressed by the skin glands.

The protein localises to the secreted. Functionally, vasodilator. Bradykinin produces in vitro relaxation of rat arterial smooth muscle and constriction of intestinal smooth muscle. May target bradykinin receptors (BDKRB). The protein is Kininogen-1 of Bombina orientalis (Oriental fire-bellied toad).